We begin with the raw amino-acid sequence, 59 residues long: Conotoxin ViVB (59 aa).

A signal peptide spans 1–22 (MRCVPVFIILLLLIPSAPSAAV). Residues 23-46 (QPKTEKDDVPLASFHDSAMRILSR) constitute a propeptide that is removed on maturation. A Pyrrolidone carboxylic acid modification is found at Gln47. Position 58 is a valine amide (Val58).

Post-translationally, contains 2 disulfide bonds that can be either 'C1-C3, C2-C4' or 'C1-C4, C2-C3', since these disulfide connectivities have been observed for conotoxins with cysteine framework V (for examples, see AC P0DQQ7 and AC P81755). As to expression, expressed by the venom duct.

Its subcellular location is the secreted. In Conus virgo (Virgin cone), this protein is Conotoxin ViVB.